Reading from the N-terminus, the 255-residue chain is Tabinhibitin 2 (255 aa).

Positions 1–23 (MISILVSRFLLAALVLQYATIDA) are cleaved as a signal peptide. Positions 32–34 (RGD) match the Cell attachment site motif. The SCP domain occupies 67–211 (LSKINDVRDH…KARALLTCNF (145 aa)).

It belongs to the CRISP family. As to expression, expressed in salivary glands.

The protein localises to the secreted. Inhibits platelet aggregation induced by all agonists tested (ADP, arachidonic acid, the thromboxane A2 analog U46619, thrombin, and snake venom snaclecs (TMVA that activates platelet through GPIB, and stejnulxin that specifically acts through GPVI (GP6))). May act by competing with fibrinogen for binding to glycoprotein IIb/IIIa (ITGA2B/ITGB3). The polypeptide is Tabinhibitin 2 (Tabanus yao (Horsefly)).